Here is a 1105-residue protein sequence, read N- to C-terminus: Lysylphosphatidylglycerol biosynthesis bifunctional protein LysX (1105 aa).

Residues 1 to 603 (MTVTKPRSVQ…LLHHDGSAPD (603 aa)) form a phosphatidylglycerol lysyltransferase region. Transmembrane regions (helical) follow at residues 20-40 (VPAAAGWAVGVIATLSLLASI), 62-82 (FPDTSFAWSFVLALLAAALAA), 86-106 (IAWLLLLTNVVLAAFLNAADI), 117-137 (FGENLGFAVHVVAIVVLVLGY), 154-174 (AVLVAGGAIGILVSWGLVELF), 186-203 (YVANRVIGFALADPDLFT), and 208-228 (VFLNAMFGLFGALALIAATIV). The segment at 604-1105 (VSGLRQSAIA…TLPFPLAKPH (502 aa)) is lysine--tRNA ligase. 2 residues coordinate Mg(2+): aspartate 1017 and glutamate 1024.

It in the N-terminal section; belongs to the LPG synthetase family. This sequence in the C-terminal section; belongs to the class-II aminoacyl-tRNA synthetase family. Mg(2+) is required as a cofactor.

The protein resides in the cell membrane. The catalysed reaction is tRNA(Lys) + L-lysine + ATP = L-lysyl-tRNA(Lys) + AMP + diphosphate. The enzyme catalyses L-lysyl-tRNA(Lys) + a 1,2-diacyl-sn-glycero-3-phospho-(1'-sn-glycerol) = a 1,2-diacyl-sn-glycero-3-phospho-1'-(3'-O-L-lysyl)-sn-glycerol + tRNA(Lys). Catalyzes the production of L-lysyl-tRNA(Lys)transfer and the transfer of a lysyl group from L-lysyl-tRNA(Lys) to membrane-bound phosphatidylglycerol (PG), which produces lysylphosphatidylglycerol (LPG), one of the components of the bacterial membrane with a positive net charge. LPG synthesis contributes to the resistance to cationic antimicrobial peptides (CAMPs) and likely protects M.tuberculosis against the CAMPs produced by competiting microorganisms (bacteriocins). In fact, the modification of anionic phosphatidylglycerol with positively charged L-lysine results in repulsion of the peptides. The polypeptide is Lysylphosphatidylglycerol biosynthesis bifunctional protein LysX (lysX) (Mycobacterium marinum (strain ATCC BAA-535 / M)).